Here is a 542-residue protein sequence, read N- to C-terminus: Chaperonin GroEL 2 (542 aa).

Residues 30–33 (TLGP), Lys51, 87–91 (DGTTT), Gly415, and Asp496 contribute to the ATP site.

This sequence belongs to the chaperonin (HSP60) family. In terms of assembly, forms a cylinder of 14 subunits composed of two heptameric rings stacked back-to-back. Interacts with the co-chaperonin GroES.

The protein localises to the cytoplasm. The catalysed reaction is ATP + H2O + a folded polypeptide = ADP + phosphate + an unfolded polypeptide.. In terms of biological role, together with its co-chaperonin GroES, plays an essential role in assisting protein folding. The GroEL-GroES system forms a nano-cage that allows encapsulation of the non-native substrate proteins and provides a physical environment optimized to promote and accelerate protein folding. The chain is Chaperonin GroEL 2 from Rhizobium etli (strain ATCC 51251 / DSM 11541 / JCM 21823 / NBRC 15573 / CFN 42).